A 291-amino-acid polypeptide reads, in one-letter code: Nucleotide-binding protein PPA0813 (291 aa).

Residue 17–24 (GISGAGRR) coordinates ATP. Residue 66 to 69 (DVRS) participates in GTP binding.

It belongs to the RapZ-like family.

Functionally, displays ATPase and GTPase activities. This chain is Nucleotide-binding protein PPA0813, found in Cutibacterium acnes (strain DSM 16379 / KPA171202) (Propionibacterium acnes).